The primary structure comprises 431 residues: Histidine--tRNA ligase (431 aa).

This sequence belongs to the class-II aminoacyl-tRNA synthetase family. Homodimer.

Its subcellular location is the cytoplasm. The enzyme catalyses tRNA(His) + L-histidine + ATP = L-histidyl-tRNA(His) + AMP + diphosphate + H(+). The protein is Histidine--tRNA ligase of Neisseria meningitidis serogroup A / serotype 4A (strain DSM 15465 / Z2491).